The chain runs to 20 residues: Zinc metalloproteinase-disintegrin-like uracoina-1 (20 aa).

The protein belongs to the venom metalloproteinase (M12B) family. P-III subfamily. In terms of assembly, monomer. Zn(2+) serves as cofactor. In terms of tissue distribution, expressed by the venom gland.

It is found in the secreted. Inhibited by ethylenediaminetetraacetic acid (EDTA) and 1,10-phenanthroline. Not inhibited by tosyl-L-lysine chloromethyl ketone (TCLK) and phenylmethanesulfonylfluoride (PMSF). Its function is as follows. Snake venom zinc metalloprotease that possesses hemorrhagic activity (minimum hemorrhagic dose, MHD=4.7 ug) when injected intradermally into mice. Degrades the alpha-chain of fibrinogen (FGA). The polypeptide is Zinc metalloproteinase-disintegrin-like uracoina-1 (Crotalus vegrandis (Uracoan rattlesnake)).